A 359-amino-acid chain; its full sequence is Maleylacetate reductase 2 (359 aa).

It belongs to the iron-containing alcohol dehydrogenase family. As to quaternary structure, homodimer.

The catalysed reaction is 3-oxoadipate + NAD(+) = maleylacetate + NADH + H(+). The enzyme catalyses 3-oxoadipate + NADP(+) = maleylacetate + NADPH + H(+). It participates in aromatic compound metabolism; 3-chlorocatechol degradation. Inhibited by p-chloromercuribenzoate and by 3-oxoadipate, and, in a temperature-dependent manner, by manganese. Plays a major role in the degradation of chloroaromatic compounds by channeling maleylacetate and some of its substituted derivatives into the 3-oxoadipate pathway. This enzyme converts maleylacetate and 2-chloromaleylacetate with similar efficiencies. NADH is preferred to NADPH as the cosubstrate. This Cupriavidus pinatubonensis (strain JMP 134 / LMG 1197) (Cupriavidus necator (strain JMP 134)) protein is Maleylacetate reductase 2 (tfdFII).